Consider the following 362-residue polypeptide: Protein U8 (362 aa).

Belongs to the herpesviridae US22 family.

This Human herpesvirus 7 (strain JI) (HHV-7) protein is Protein U8 (U8).